The primary structure comprises 87 residues: UPF0250 protein BUsg_472 (87 aa).

This sequence belongs to the UPF0250 family.

The chain is UPF0250 protein BUsg_472 from Buchnera aphidicola subsp. Schizaphis graminum (strain Sg).